Here is a 100-residue protein sequence, read N- to C-terminus: Large ribosomal subunit protein bL28 (100 aa).

Residues 1-21 form a disordered region; the sequence is MSRVCDITGQGKSFGNKVSHS. The span at 10–19 shows a compositional bias: polar residues; that stretch reads QGKSFGNKVS.

Belongs to the bacterial ribosomal protein bL28 family.

This Ehrlichia canis (strain Jake) protein is Large ribosomal subunit protein bL28.